Reading from the N-terminus, the 88-residue chain is KTx type I (88 aa).

The first 19 residues, 1–19 (MKTTLVVVVLACIVALTSA), serve as a signal peptide directing secretion. The ShKT domain occupies 54-88 (CKDVLSEFSCGVLKKDGQCNKADIQAKCKLTCDKC). 3 disulfides stabilise this stretch: cysteine 54/cysteine 88, cysteine 63/cysteine 81, and cysteine 72/cysteine 85.

This sequence belongs to the sea anemone type 1 potassium channel toxin family. In terms of tissue distribution, expressed both outside and in acontia, a specialised envenomation structure laden with batteries of venom-containing nematocysts found only in the superfamily Metridioidea.

It localises to the secreted. Its subcellular location is the nematocyst. In terms of biological role, inhibits voltage-gated potassium channels (Kv1/KCNA). The chain is KTx type I from Calliactis polypus (Hermit crab anemone).